We begin with the raw amino-acid sequence, 438 residues long: Serine hydroxymethyltransferase (438 aa).

(6S)-5,6,7,8-tetrahydrofolate is bound by residues Leu135 and 139-141 (GHL). Lys244 bears the N6-(pyridoxal phosphate)lysine mark. Residues 361–383 (GVPNDPLPPVKTSGIRVGSPAGT) are disordered.

This sequence belongs to the SHMT family. As to quaternary structure, homodimer. Requires pyridoxal 5'-phosphate as cofactor.

It is found in the cytoplasm. The catalysed reaction is (6R)-5,10-methylene-5,6,7,8-tetrahydrofolate + glycine + H2O = (6S)-5,6,7,8-tetrahydrofolate + L-serine. It participates in one-carbon metabolism; tetrahydrofolate interconversion. Its pathway is amino-acid biosynthesis; glycine biosynthesis; glycine from L-serine: step 1/1. Functionally, catalyzes the reversible interconversion of serine and glycine with tetrahydrofolate (THF) serving as the one-carbon carrier. This reaction serves as the major source of one-carbon groups required for the biosynthesis of purines, thymidylate, methionine, and other important biomolecules. Also exhibits THF-independent aldolase activity toward beta-hydroxyamino acids, producing glycine and aldehydes, via a retro-aldol mechanism. The chain is Serine hydroxymethyltransferase from Rhizorhabdus wittichii (strain DSM 6014 / CCUG 31198 / JCM 15750 / NBRC 105917 / EY 4224 / RW1) (Sphingomonas wittichii).